A 118-amino-acid polypeptide reads, in one-letter code: Small ribosomal subunit protein uS13 (118 aa).

The interval 94–118 is disordered; the sequence is GLPLRGQRTKTNARTRKGPRKPIKK.

Belongs to the universal ribosomal protein uS13 family. In terms of assembly, part of the 30S ribosomal subunit. Forms a loose heterodimer with protein S19. Forms two bridges to the 50S subunit in the 70S ribosome.

In terms of biological role, located at the top of the head of the 30S subunit, it contacts several helices of the 16S rRNA. In the 70S ribosome it contacts the 23S rRNA (bridge B1a) and protein L5 of the 50S subunit (bridge B1b), connecting the 2 subunits; these bridges are implicated in subunit movement. Contacts the tRNAs in the A and P-sites. The protein is Small ribosomal subunit protein uS13 of Cellvibrio japonicus (strain Ueda107) (Pseudomonas fluorescens subsp. cellulosa).